The primary structure comprises 289 residues: Energy-coupling factor transporter ATP-binding protein EcfA2 (289 aa).

The 243-residue stretch at I3–D245 folds into the ABC transporter domain. Residue G40–S47 coordinates ATP.

This sequence belongs to the ABC transporter superfamily. Energy-coupling factor EcfA family. Forms a stable energy-coupling factor (ECF) transporter complex composed of 2 membrane-embedded substrate-binding proteins (S component), 2 ATP-binding proteins (A component) and 2 transmembrane proteins (T component).

It localises to the cell membrane. Functionally, ATP-binding (A) component of a common energy-coupling factor (ECF) ABC-transporter complex. Unlike classic ABC transporters this ECF transporter provides the energy necessary to transport a number of different substrates. In Lactobacillus johnsonii (strain CNCM I-12250 / La1 / NCC 533), this protein is Energy-coupling factor transporter ATP-binding protein EcfA2.